A 132-amino-acid chain; its full sequence is Phosphoribosyl-AMP cyclohydrolase (132 aa).

Asp-79 is a Mg(2+) binding site. Cys-80 serves as a coordination point for Zn(2+). 2 residues coordinate Mg(2+): Asp-81 and Asp-83. Residues Cys-100 and Cys-107 each contribute to the Zn(2+) site.

This sequence belongs to the PRA-CH family. Homodimer. Mg(2+) serves as cofactor. The cofactor is Zn(2+).

The protein resides in the cytoplasm. It carries out the reaction 1-(5-phospho-beta-D-ribosyl)-5'-AMP + H2O = 1-(5-phospho-beta-D-ribosyl)-5-[(5-phospho-beta-D-ribosylamino)methylideneamino]imidazole-4-carboxamide. It functions in the pathway amino-acid biosynthesis; L-histidine biosynthesis; L-histidine from 5-phospho-alpha-D-ribose 1-diphosphate: step 3/9. Its function is as follows. Catalyzes the hydrolysis of the adenine ring of phosphoribosyl-AMP. This is Phosphoribosyl-AMP cyclohydrolase from Acidovorax sp. (strain JS42).